Consider the following 309-residue polypeptide: Ornithine carbamoyltransferase (309 aa).

Carbamoyl phosphate contacts are provided by residues 51-54 (STRT), glutamine 78, arginine 102, and 129-132 (HPCQ). Residues asparagine 161, aspartate 225, and 229-230 (SM) contribute to the L-ornithine site. Carbamoyl phosphate is bound by residues 265 to 266 (CL) and arginine 293.

This sequence belongs to the aspartate/ornithine carbamoyltransferase superfamily. OTCase family.

The protein resides in the cytoplasm. The enzyme catalyses carbamoyl phosphate + L-ornithine = L-citrulline + phosphate + H(+). The protein operates within amino-acid biosynthesis; L-arginine biosynthesis; L-arginine from L-ornithine and carbamoyl phosphate: step 1/3. Its function is as follows. Reversibly catalyzes the transfer of the carbamoyl group from carbamoyl phosphate (CP) to the N(epsilon) atom of ornithine (ORN) to produce L-citrulline. The chain is Ornithine carbamoyltransferase from Mycolicibacterium paratuberculosis (strain ATCC BAA-968 / K-10) (Mycobacterium paratuberculosis).